Here is a 208-residue protein sequence, read N- to C-terminus: GTP-binding protein Rho1 (208 aa).

Position 19-26 (Gly-19–Thr-26) interacts with GTP. An Effector region motif is present at residues Tyr-41 to Tyr-49. GTP-binding positions include Asp-66–Gln-70 and Cys-124–Asp-127. Residues Gly-188–Leu-208 form a disordered region. Over residues Gly-191–Leu-208 the composition is skewed to basic residues. Cys-205 carries the post-translational modification Cysteine methyl ester. Residue Cys-205 is the site of S-geranylgeranyl cysteine attachment. Residues Val-206 to Leu-208 constitute a propeptide, removed in mature form.

This sequence belongs to the small GTPase superfamily. Rho family.

It is found in the cell membrane. In Kluyveromyces lactis (strain ATCC 8585 / CBS 2359 / DSM 70799 / NBRC 1267 / NRRL Y-1140 / WM37) (Yeast), this protein is GTP-binding protein Rho1 (RHO1).